The sequence spans 292 residues: Shikimate dehydrogenase (NADP(+)) (292 aa).

Residues 22–24 (SLS) and serine 69 each bind shikimate. Lysine 73 serves as the catalytic Proton acceptor. The shikimate site is built by asparagine 94 and aspartate 111. NADP(+) is bound by residues 135-139 (GVGGA) and isoleucine 236. Tyrosine 238 is a shikimate binding site. Glycine 260 is an NADP(+) binding site.

Belongs to the shikimate dehydrogenase family. In terms of assembly, homodimer.

The catalysed reaction is shikimate + NADP(+) = 3-dehydroshikimate + NADPH + H(+). Its pathway is metabolic intermediate biosynthesis; chorismate biosynthesis; chorismate from D-erythrose 4-phosphate and phosphoenolpyruvate: step 4/7. Involved in the biosynthesis of the chorismate, which leads to the biosynthesis of aromatic amino acids. Catalyzes the reversible NADPH linked reduction of 3-dehydroshikimate (DHSA) to yield shikimate (SA). In Streptococcus pyogenes serotype M18 (strain MGAS8232), this protein is Shikimate dehydrogenase (NADP(+)).